The sequence spans 315 residues: Ribosomal RNA small subunit methyltransferase H (315 aa).

Residues 35–37 (GGH), Asp55, Phe80, Asp102, and Gln109 contribute to the S-adenosyl-L-methionine site.

This sequence belongs to the methyltransferase superfamily. RsmH family.

It is found in the cytoplasm. It carries out the reaction cytidine(1402) in 16S rRNA + S-adenosyl-L-methionine = N(4)-methylcytidine(1402) in 16S rRNA + S-adenosyl-L-homocysteine + H(+). In terms of biological role, specifically methylates the N4 position of cytidine in position 1402 (C1402) of 16S rRNA. The protein is Ribosomal RNA small subunit methyltransferase H of Buchnera aphidicola subsp. Baizongia pistaciae (strain Bp).